The primary structure comprises 321 residues: Coiled-coil domain-containing protein 42-like 1 (321 aa).

Coiled-coil stretches lie at residues 36–144 (IRRL…EKCH) and 202–229 (IVQFSNEIHRLYIRLEKAKKKRREWELR).

This sequence belongs to the CFAP73 family.

The chain is Coiled-coil domain-containing protein 42-like 1 from Xenopus laevis (African clawed frog).